The chain runs to 24 residues: Cytochrome c3-2 (24 aa).

A disordered region spans residues 1-24; it reads GNAPAADMVLKAPGDAKMTKTAVP.

Binds 4 heme groups per subunit.

Its subcellular location is the periplasm. Participates in sulfate respiration coupled with phosphorylation by transferring electrons from the enzyme dehydrogenase to ferredoxin. This Nitratidesulfovibrio vulgaris (Desulfovibrio vulgaris) protein is Cytochrome c3-2.